Here is a 126-residue protein sequence, read N- to C-terminus: Holo-[acyl-carrier-protein] synthase (126 aa).

Positions 9 and 58 each coordinate Mg(2+).

The protein belongs to the P-Pant transferase superfamily. AcpS family. Mg(2+) serves as cofactor.

The protein resides in the cytoplasm. The catalysed reaction is apo-[ACP] + CoA = holo-[ACP] + adenosine 3',5'-bisphosphate + H(+). Its function is as follows. Transfers the 4'-phosphopantetheine moiety from coenzyme A to a Ser of acyl-carrier-protein. The protein is Holo-[acyl-carrier-protein] synthase of Escherichia coli O17:K52:H18 (strain UMN026 / ExPEC).